A 418-amino-acid polypeptide reads, in one-letter code: Beta-2 adrenergic receptor (418 aa).

The Extracellular portion of the chain corresponds to Met-1–Val-34. 2 N-linked (GlcNAc...) asparagine glycosylation sites follow: Asn-6 and Asn-15. A helical transmembrane segment spans residues Gly-35–Ile-58. The Cytoplasmic portion of the chain corresponds to Ala-59 to Phe-71. The chain crosses the membrane as a helical span at residues Ile-72–Leu-95. Topologically, residues Met-96–Cys-106 are extracellular. Cystine bridges form between Cys-106–Cys-191 and Cys-184–Cys-190. Residues Glu-107–Val-129 form a helical membrane-spanning segment. Residues Asp-130–Ala-150 lie on the Cytoplasmic side of the membrane. At Tyr-141 the chain carries Phosphotyrosine. A helical membrane pass occupies residues Arg-151 to Tyr-174. The Extracellular segment spans residues Gln-175–Asn-196. Residues Gln-197 to Ser-220 traverse the membrane as a helical segment. The Cytoplasmic portion of the chain corresponds to Arg-221–Thr-274. Position 246 is a phosphoserine (Ser-246). Phosphoserine; by PKA occurs at positions 261 and 262. Cys-265 carries S-palmitoyl cysteine lipidation. A helical transmembrane segment spans residues Leu-275–Ile-298. The Extracellular portion of the chain corresponds to His-299–Lys-305. A helical transmembrane segment spans residues Glu-306–Ser-329. The Cytoplasmic segment spans residues Pro-330–Leu-418. Residue Cys-341 is the site of S-palmitoyl cysteine attachment. Ser-345 and Ser-346 each carry phosphoserine; by PKA. Residues Ser-355 and Ser-356 each carry the phosphoserine; by BARK modification. The segment at Arg-381–Leu-418 is disordered. Residues Pro-387 and Pro-400 each carry the 4-hydroxyproline modification. Residues Asp-405–Leu-418 show a composition bias toward polar residues. Residues Asp-415–Leu-418 carry the PDZ-binding motif.

The protein belongs to the G-protein coupled receptor 1 family. Adrenergic receptor subfamily. ADRB2 sub-subfamily. In terms of assembly, binds NHERF1 and GPRASP1. Interacts with ARRB1 and ARRB2. Interacts with SRC. Interacts with USP20 and USP33. Interacts with VHL; the interaction, which is increased on hydroxylation of ADRB2, ubiquitinates ADRB2 leading to its degradation. Interacts with EGLN3; the interaction hydroxylates ADRB2 facilitating VHL-E3 ligase-mediated ubiquitination. Interacts (via PDZ-binding motif) with SNX27 (via PDZ domain); the interaction is required when endocytosed to prevent degradation in lysosomes and promote recycling to the plasma membrane. Interacts with CNIH4. Interacts with ARRDC3. Interacts with NEDD4. Interacts with MARCHF2. Palmitoylated; may reduce accessibility of Ser-345 and Ser-346 by anchoring Cys-341 to the plasma membrane. Agonist stimulation promotes depalmitoylation and further allows Ser-345 and Ser-346 phosphorylation. In terms of processing, phosphorylated by PKA and BARK upon agonist stimulation, which mediates homologous desensitization of the receptor. PKA-mediated phosphorylation seems to facilitate phosphorylation by BARK. Post-translationally, phosphorylation of Tyr-141 is induced by insulin and leads to supersensitization of the receptor. Polyubiquitinated. Agonist-induced ubiquitination leads to sort internalized receptors to the lysosomes for degradation. Deubiquitination by USP20 and USP33, leads to ADRB2 recycling and resensitization after prolonged agonist stimulation. USP20 and USP33 are constitutively associated and are dissociated immediately after agonist stimulation. Ubiquitination by the VHL-E3 ligase complex is oxygen-dependent. In terms of processing, hydroxylation by EGLN3 occurs only under normoxia and increases the interaction with VHL and the subsequent ubiquitination and degradation of ADRB2. Post-translationally, palmitoylated. Mainly palmitoylated at Cys-341. Palmitoylation may reduce accessibility of phosphorylation sites by anchoring the receptor to the plasma membrane. Agonist stimulation promotes depalmitoylation and further allows Ser-345 and Ser-346 phosphorylation. Also undergoes transient, ligand-induced palmitoylation at Cys-265 probably by ZDHHC9, ZDHHC14 and ZDHHC18 within the Golgi. Palmitoylation at Cys-265 requires phosphorylation by PKA and receptor internalization and stabilizes the receptor. Could be depalmitoylated by LYPLA1 at the plasma membrane. As to expression, expressed in heart, liver, lung, skeletal muscle and subcutaneous adipose tissue.

Its subcellular location is the cell membrane. It localises to the early endosome. The protein resides in the golgi apparatus. Its function is as follows. Beta-adrenergic receptors mediate the catecholamine-induced activation of adenylate cyclase through the action of G proteins. The beta-2-adrenergic receptor binds epinephrine with an approximately 30-fold greater affinity than it does norepinephrine. This is Beta-2 adrenergic receptor (ADRB2) from Sus scrofa (Pig).